We begin with the raw amino-acid sequence, 353 residues long: MKQNKKLLVMAGGTGGHVFPGLAVAKKLQQQGWEIRWLGTADRMEADLVPKHGIEIDFIKVKGLRGQGVSKLIKAPFQIINAILQARRHIKAWQPDVVLGMGGYVSGPGGIAAWLSGIPVVLHEQNAVAGLTNQWLSKIAKKVFQAFPGAFPTAEVVGNPVREDVVALADPEQRMAERDGDIRILVMGGSQGAKILNDTLPVTMAQLGEGFTVVHQAGKNNQQQVIEQYKSHSVDNVQVTEFIDDVAQAYEWADLLVCRSGALTVSEVSAAGVGSIFVPFMHKDRQQALNADHLVECGAALMIEQPQLTADKLANTIAQLDRNELKMMATKARQAAKLDADVTVAEAIKALAK.

Residues T14–G16, N126, R162, S190, I243, A262–E267, and Q287 each bind UDP-N-acetyl-alpha-D-glucosamine.

This sequence belongs to the glycosyltransferase 28 family. MurG subfamily.

The protein localises to the cell inner membrane. It carries out the reaction di-trans,octa-cis-undecaprenyl diphospho-N-acetyl-alpha-D-muramoyl-L-alanyl-D-glutamyl-meso-2,6-diaminopimeloyl-D-alanyl-D-alanine + UDP-N-acetyl-alpha-D-glucosamine = di-trans,octa-cis-undecaprenyl diphospho-[N-acetyl-alpha-D-glucosaminyl-(1-&gt;4)]-N-acetyl-alpha-D-muramoyl-L-alanyl-D-glutamyl-meso-2,6-diaminopimeloyl-D-alanyl-D-alanine + UDP + H(+). The protein operates within cell wall biogenesis; peptidoglycan biosynthesis. Functionally, cell wall formation. Catalyzes the transfer of a GlcNAc subunit on undecaprenyl-pyrophosphoryl-MurNAc-pentapeptide (lipid intermediate I) to form undecaprenyl-pyrophosphoryl-MurNAc-(pentapeptide)GlcNAc (lipid intermediate II). The chain is UDP-N-acetylglucosamine--N-acetylmuramyl-(pentapeptide) pyrophosphoryl-undecaprenol N-acetylglucosamine transferase from Vibrio atlanticus (strain LGP32) (Vibrio splendidus (strain Mel32)).